A 568-amino-acid chain; its full sequence is Proline--tRNA ligase (568 aa).

It belongs to the class-II aminoacyl-tRNA synthetase family. ProS type 1 subfamily. In terms of assembly, homodimer.

Its subcellular location is the cytoplasm. It carries out the reaction tRNA(Pro) + L-proline + ATP = L-prolyl-tRNA(Pro) + AMP + diphosphate. Catalyzes the attachment of proline to tRNA(Pro) in a two-step reaction: proline is first activated by ATP to form Pro-AMP and then transferred to the acceptor end of tRNA(Pro). As ProRS can inadvertently accommodate and process non-cognate amino acids such as alanine and cysteine, to avoid such errors it has two additional distinct editing activities against alanine. One activity is designated as 'pretransfer' editing and involves the tRNA(Pro)-independent hydrolysis of activated Ala-AMP. The other activity is designated 'posttransfer' editing and involves deacylation of mischarged Ala-tRNA(Pro). The misacylated Cys-tRNA(Pro) is not edited by ProRS. This Listeria monocytogenes serovar 1/2a (strain ATCC BAA-679 / EGD-e) protein is Proline--tRNA ligase.